The primary structure comprises 224 residues: Cytidylate kinase (224 aa).

11 to 19 (GPAAAGKST) contacts ATP.

Belongs to the cytidylate kinase family. Type 1 subfamily.

The protein localises to the cytoplasm. The catalysed reaction is CMP + ATP = CDP + ADP. The enzyme catalyses dCMP + ATP = dCDP + ADP. The protein is Cytidylate kinase of Geobacillus kaustophilus (strain HTA426).